Reading from the N-terminus, the 424-residue chain is Phosphomethylpyrimidine synthase (424 aa).

Substrate is bound by residues N66, M95, Y124, H163, 185–187 (SRG), 226–229 (DGMR), and E265. H269 serves as a coordination point for Zn(2+). F292 lines the substrate pocket. H333 is a Zn(2+) binding site. Residues C408, C411, and C415 each coordinate [4Fe-4S] cluster.

The protein belongs to the ThiC family. [4Fe-4S] cluster serves as cofactor.

It carries out the reaction 5-amino-1-(5-phospho-beta-D-ribosyl)imidazole + S-adenosyl-L-methionine = 4-amino-2-methyl-5-(phosphooxymethyl)pyrimidine + CO + 5'-deoxyadenosine + formate + L-methionine + 3 H(+). It participates in cofactor biosynthesis; thiamine diphosphate biosynthesis. Catalyzes the synthesis of the hydroxymethylpyrimidine phosphate (HMP-P) moiety of thiamine from aminoimidazole ribotide (AIR) in a radical S-adenosyl-L-methionine (SAM)-dependent reaction. In Thermotoga sp. (strain RQ2), this protein is Phosphomethylpyrimidine synthase.